The sequence spans 519 residues: Cell division cycle protein 20 homolog B (519 aa).

The segment covering Q79 to Y98 has biased composition (polar residues). The tract at residues Q79–S133 is disordered. Basic and acidic residues predominate over residues P110 to L125. WD repeat units lie at residues R229–N266, L271–N310, M311–D341, R353–G392, T399–T441, S443–G484, and G487–Y519.

It belongs to the WD repeat CDC20/Fizzy family. Expressed in multiciliated cells (MCCs).

It is found in the cytoplasm. In terms of biological role, protein regulator of centriole-deuterosome disengagement and subsequently participates in the ciliogenesis in multiciliated cells (MCCs). The sequence is that of Cell division cycle protein 20 homolog B from Homo sapiens (Human).